The chain runs to 149 residues: Urease accessory protein UreE (149 aa).

Belongs to the UreE family.

The protein localises to the cytoplasm. Involved in urease metallocenter assembly. Binds nickel. Probably functions as a nickel donor during metallocenter assembly. This chain is Urease accessory protein UreE, found in Prochlorococcus marinus (strain MIT 9312).